A 293-amino-acid polypeptide reads, in one-letter code: 4-hydroxy-tetrahydrodipicolinate synthase (293 aa).

A pyruvate-binding site is contributed by threonine 51. Residue tyrosine 140 is the Proton donor/acceptor of the active site. The active-site Schiff-base intermediate with substrate is the lysine 168. Isoleucine 209 serves as a coordination point for pyruvate.

Belongs to the DapA family. In terms of assembly, homotetramer; dimer of dimers.

The protein localises to the cytoplasm. It carries out the reaction L-aspartate 4-semialdehyde + pyruvate = (2S,4S)-4-hydroxy-2,3,4,5-tetrahydrodipicolinate + H2O + H(+). It participates in amino-acid biosynthesis; L-lysine biosynthesis via DAP pathway; (S)-tetrahydrodipicolinate from L-aspartate: step 3/4. Its function is as follows. Catalyzes the condensation of (S)-aspartate-beta-semialdehyde [(S)-ASA] and pyruvate to 4-hydroxy-tetrahydrodipicolinate (HTPA). This Streptococcus mutans serotype c (strain ATCC 700610 / UA159) protein is 4-hydroxy-tetrahydrodipicolinate synthase.